Here is a 107-residue protein sequence, read N- to C-terminus: Ig kappa chain V-VI region XRPC 24 (107 aa).

The framework-1 stretch occupies residues 1–23 (EIVLTQSPAITAASLGQKVTITC). The cysteines at positions 23 and 87 are disulfide-linked. Residues 24 to 33 (SASSSVSYMH) are complementarity-determining-1. The framework-2 stretch occupies residues 34–48 (WYQQKSGTSPKPWIY). A complementarity-determining-2 region spans residues 49-55 (EISKLAS). The interval 56–87 (GVPARFSGSGSGTSYSLTISSMEAEDAAIYYC) is framework-3. The segment at 88 to 96 (QQWNYPLIT) is complementarity-determining-3. Positions 97–106 (FGSGTKLEIK) are framework-4.

This Mus musculus (Mouse) protein is Ig kappa chain V-VI region XRPC 24.